A 353-amino-acid chain; its full sequence is Protein RecA (353 aa).

An ATP-binding site is contributed by 68–75 (GPESSGKT).

This sequence belongs to the RecA family.

The protein localises to the cytoplasm. Can catalyze the hydrolysis of ATP in the presence of single-stranded DNA, the ATP-dependent uptake of single-stranded DNA by duplex DNA, and the ATP-dependent hybridization of homologous single-stranded DNAs. It interacts with LexA causing its activation and leading to its autocatalytic cleavage. The polypeptide is Protein RecA (Roseiflexus castenholzii (strain DSM 13941 / HLO8)).